Here is a 682-residue protein sequence, read N- to C-terminus: Probable glycosyl transferase Gly (682 aa).

UDP-binding positions include 21 to 26 (CASFSD) and 112 to 113 (DC). 3 residues coordinate Mn(2+): aspartate 112, aspartate 114, and histidine 230. Position 230 to 236 (230 to 236 (HYLPERK)) interacts with UDP.

The protein belongs to the glycosyltransferase 8 family. In terms of assembly, part of the accessory SecA2/SecY2 protein translocation apparatus required to export cell wall protein GspB.

Its function is as follows. Part of the accessory SecA2/SecY2 system specifically required to export GspB, a serine-rich repeat cell wall protein encoded upstream in the same operon. The protein is Probable glycosyl transferase Gly (gly) of Streptococcus gordonii.